A 188-amino-acid polypeptide reads, in one-letter code: Pro-adrenomedullin (188 aa).

Positions Met-1–Thr-21 are cleaved as a signal peptide. At Arg-41 the chain carries Arginine amide. The propeptide occupies Glu-45–Val-92. A disulfide bond links Cys-110 and Cys-115. Residues Asp-131–Pro-176 form a disordered region. Tyr-146 carries the post-translational modification Tyrosine amide. Positions Ser-153 to Met-188 are cleaved as a propeptide — preproAM C-terminal fragment.

Belongs to the adrenomedullin family.

It is found in the secreted. Functionally, adrenomedullin/ADM and proadrenomedullin N-20 terminal peptide/PAMP are peptide hormones that act as potent hypotensive and vasodilatator agents. Numerous actions have been reported most related to the physiologic control of fluid and electrolyte homeostasis. Its function is as follows. ADM function is mediated by the CALCRL-RAMP2 and CALCRL-RAMP3 receptor complexes with ADM showing the highest potency for the CALCRL-RAMP2 complex. In Canis lupus familiaris (Dog), this protein is Pro-adrenomedullin (ADM).